Consider the following 246-residue polypeptide: 4-hydroxy-tetrahydrodipicolinate reductase (246 aa).

Residue 7–12 (GCSGRM) coordinates NAD(+). NADP(+) is bound at residue R34. NAD(+)-binding positions include 76 to 78 (ATT) and 102 to 105 (CPNT). H135 acts as the Proton donor/acceptor in catalysis. Residue H136 participates in (S)-2,3,4,5-tetrahydrodipicolinate binding. The active-site Proton donor is the K139. 145-146 (GT) lines the (S)-2,3,4,5-tetrahydrodipicolinate pocket.

The protein belongs to the DapB family.

The protein resides in the cytoplasm. The catalysed reaction is (S)-2,3,4,5-tetrahydrodipicolinate + NAD(+) + H2O = (2S,4S)-4-hydroxy-2,3,4,5-tetrahydrodipicolinate + NADH + H(+). The enzyme catalyses (S)-2,3,4,5-tetrahydrodipicolinate + NADP(+) + H2O = (2S,4S)-4-hydroxy-2,3,4,5-tetrahydrodipicolinate + NADPH + H(+). Its pathway is amino-acid biosynthesis; L-lysine biosynthesis via DAP pathway; (S)-tetrahydrodipicolinate from L-aspartate: step 4/4. In terms of biological role, catalyzes the conversion of 4-hydroxy-tetrahydrodipicolinate (HTPA) to tetrahydrodipicolinate. The polypeptide is 4-hydroxy-tetrahydrodipicolinate reductase (Chlamydia abortus (strain DSM 27085 / S26/3) (Chlamydophila abortus)).